The primary structure comprises 356 residues: GDSL esterase/lipase At2g36325 (356 aa).

The N-terminal stretch at 1–26 (MNITKLTPWFLFSCLILLSDYIKVNS) is a signal peptide. An N-linked (GlcNAc...) asparagine glycan is attached at N25. The active-site Nucleophile is S54. N-linked (GlcNAc...) asparagine glycans are attached at residues N165, N185, and N240. Catalysis depends on residues D334 and H337.

This sequence belongs to the 'GDSL' lipolytic enzyme family.

The protein localises to the secreted. This Arabidopsis thaliana (Mouse-ear cress) protein is GDSL esterase/lipase At2g36325.